Here is a 245-residue protein sequence, read N- to C-terminus: Putative protein phosphatase 2C-like protein 45 (245 aa).

In terms of domain architecture, PPM-type phosphatase spans 1 to 188 (MEDRFSTITN…DDISVMLIPL (188 aa)).

This sequence belongs to the PP2C family.

This chain is Putative protein phosphatase 2C-like protein 45, found in Arabidopsis thaliana (Mouse-ear cress).